Here is a 236-residue protein sequence, read N- to C-terminus: UPF0257 lipoprotein YnfC (236 aa).

The signal sequence occupies residues 1–16 (MKYKLLPCLLAILLTG). Cysteine 17 carries N-palmitoyl cysteine lipidation. Cysteine 17 carries the S-diacylglycerol cysteine lipid modification.

It belongs to the UPF0257 family.

It localises to the cell membrane. This Escherichia coli O81 (strain ED1a) protein is UPF0257 lipoprotein YnfC.